Reading from the N-terminus, the 332-residue chain is Probable electron transfer flavoprotein subunit alpha, mitochondrial (332 aa).

275 to 303 (LYIAIGISGAIQHLAGMKDSKVIVAINKD) serves as a coordination point for FAD.

The protein belongs to the ETF alpha-subunit/FixB family. In terms of assembly, heterodimer of an alpha and a beta subunit. The cofactor is FAD.

It is found in the mitochondrion matrix. In terms of biological role, the electron transfer flavoprotein serves as a specific electron acceptor for several dehydrogenases, including five acyl-CoA dehydrogenases, glutaryl-CoA and sarcosine dehydrogenase. It transfers the electrons to the main mitochondrial respiratory chain via ETF-ubiquinone oxidoreductase (ETF dehydrogenase). In Caenorhabditis elegans, this protein is Probable electron transfer flavoprotein subunit alpha, mitochondrial.